Here is a 200-residue protein sequence, read N- to C-terminus: Small ribosomal subunit protein uS4 (200 aa).

One can recognise an S4 RNA-binding domain in the interval Ser94–Val157.

It belongs to the universal ribosomal protein uS4 family. As to quaternary structure, part of the 30S ribosomal subunit. Contacts protein S5. The interaction surface between S4 and S5 is involved in control of translational fidelity.

Its function is as follows. One of the primary rRNA binding proteins, it binds directly to 16S rRNA where it nucleates assembly of the body of the 30S subunit. In terms of biological role, with S5 and S12 plays an important role in translational accuracy. The polypeptide is Small ribosomal subunit protein uS4 (Metamycoplasma arthritidis (strain 158L3-1) (Mycoplasma arthritidis)).